The chain runs to 100 residues: NADH-quinone oxidoreductase subunit K 2 (100 aa).

Transmembrane regions (helical) follow at residues 2–22 (LAIENYLILSAILFAIGTIGV), 29–49 (IVIFMCIELMLNAVNLTFIAF), and 61–81 (FVFFVMTVAAAEAAVGLALMI).

Belongs to the complex I subunit 4L family. In terms of assembly, NDH-1 is composed of 14 different subunits. Subunits NuoA, H, J, K, L, M, N constitute the membrane sector of the complex.

The protein localises to the cell inner membrane. The catalysed reaction is a quinone + NADH + 5 H(+)(in) = a quinol + NAD(+) + 4 H(+)(out). Functionally, NDH-1 shuttles electrons from NADH, via FMN and iron-sulfur (Fe-S) centers, to quinones in the respiratory chain. The immediate electron acceptor for the enzyme in this species is believed to be ubiquinone. Couples the redox reaction to proton translocation (for every two electrons transferred, four hydrogen ions are translocated across the cytoplasmic membrane), and thus conserves the redox energy in a proton gradient. This chain is NADH-quinone oxidoreductase subunit K 2, found in Geobacter sp. (strain M21).